A 154-amino-acid polypeptide reads, in one-letter code: Myoglobin (154 aa).

The Globin domain maps to 2–148; it reads GLSDQEWQQV…FRNDMASKYK (147 aa). H65 serves as a coordination point for nitrite. H65 contributes to the O2 binding site. H94 serves as a coordination point for heme b.

It belongs to the globin family. In terms of assembly, monomeric.

It is found in the cytoplasm. Its subcellular location is the sarcoplasm. The catalysed reaction is Fe(III)-heme b-[protein] + nitric oxide + H2O = Fe(II)-heme b-[protein] + nitrite + 2 H(+). The enzyme catalyses H2O2 + AH2 = A + 2 H2O. Monomeric heme protein which primary function is to store oxygen and facilitate its diffusion within muscle tissues. Reversibly binds oxygen through a pentacoordinated heme iron and enables its timely and efficient release as needed during periods of heightened demand. Depending on the oxidative conditions of tissues and cells, and in addition to its ability to bind oxygen, it also has a nitrite reductase activity whereby it regulates the production of bioactive nitric oxide. Under stress conditions, like hypoxia and anoxia, it also protects cells against reactive oxygen species thanks to its pseudoperoxidase activity. This Gallus gallus (Chicken) protein is Myoglobin (MB).